Here is a 427-residue protein sequence, read N- to C-terminus: Glutamate-1-semialdehyde 2,1-aminomutase (427 aa).

Lys-264 carries the N6-(pyridoxal phosphate)lysine modification.

Belongs to the class-III pyridoxal-phosphate-dependent aminotransferase family. HemL subfamily. Homodimer. Requires pyridoxal 5'-phosphate as cofactor.

The protein resides in the cytoplasm. The catalysed reaction is (S)-4-amino-5-oxopentanoate = 5-aminolevulinate. It participates in porphyrin-containing compound metabolism; protoporphyrin-IX biosynthesis; 5-aminolevulinate from L-glutamyl-tRNA(Glu): step 2/2. The protein is Glutamate-1-semialdehyde 2,1-aminomutase of Clostridium botulinum (strain Alaska E43 / Type E3).